Consider the following 282-residue polypeptide: Energy-coupling factor transporter ATP-binding protein EcfA1 (282 aa).

The 235-residue stretch at 9–243 (IEIDNLSFKY…NDELLNIGLD (235 aa)) folds into the ABC transporter domain. 43 to 50 (GHNGSGKS) is an ATP binding site.

It belongs to the ABC transporter superfamily. Energy-coupling factor EcfA family. In terms of assembly, forms a stable energy-coupling factor (ECF) transporter complex composed of 2 membrane-embedded substrate-binding proteins (S component), 2 ATP-binding proteins (A component) and 2 transmembrane proteins (T component).

It localises to the cell membrane. Its function is as follows. ATP-binding (A) component of a common energy-coupling factor (ECF) ABC-transporter complex. Unlike classic ABC transporters this ECF transporter provides the energy necessary to transport a number of different substrates. The sequence is that of Energy-coupling factor transporter ATP-binding protein EcfA1 from Ligilactobacillus salivarius (strain UCC118) (Lactobacillus salivarius).